Here is a 258-residue protein sequence, read N- to C-terminus: Methylthioribulose-1-phosphate dehydratase (258 aa).

A disordered region spans residues 1–21 (MCSPTTENNNNNNDHLVQSSD). Cysteine 105 is a substrate binding site. The Zn(2+) site is built by histidine 123 and histidine 125. The active-site Proton donor/acceptor is glutamate 153. Position 210 (histidine 210) interacts with Zn(2+).

It belongs to the aldolase class II family. MtnB subfamily. The cofactor is Zn(2+).

It localises to the cytoplasm. The enzyme catalyses 5-(methylsulfanyl)-D-ribulose 1-phosphate = 5-methylsulfanyl-2,3-dioxopentyl phosphate + H2O. Its pathway is amino-acid biosynthesis; L-methionine biosynthesis via salvage pathway; L-methionine from S-methyl-5-thio-alpha-D-ribose 1-phosphate: step 2/6. In terms of biological role, catalyzes the dehydration of methylthioribulose-1-phosphate (MTRu-1-P) into 2,3-diketo-5-methylthiopentyl-1-phosphate (DK-MTP-1-P). The chain is Methylthioribulose-1-phosphate dehydratase from Neurospora crassa (strain ATCC 24698 / 74-OR23-1A / CBS 708.71 / DSM 1257 / FGSC 987).